Reading from the N-terminus, the 331-residue chain is Probable cyclic nucleotide synthase IK1_05630 (331 aa).

It belongs to the CD-NTase family. D12 subfamily.

Its function is as follows. Cyclic nucleotide synthase (second messenger synthase) of a CBASS antivirus system. CBASS (cyclic oligonucleotide-based antiphage signaling system) provides immunity against bacteriophage. The CD-NTase protein synthesizes cyclic nucleotides in response to infection; these serve as specific second messenger signals. The signals activate a diverse range of effectors, leading to bacterial cell death and thus abortive phage infection. A type I-B CBASS system. Functionally, probably a cyclic nucleotide synthase that makes second messenger nucleotide which activates a CBASS antiviral defense system. Protects B.subtilis against phage infection. When IK1_05630 and IK1_05631 are introduced in B.subtilis BEST7003 there is 1000-fold protection against phage SBSphiC. Both genes are required for protection. Activation leads to bacterial cell lysis and death, which occurs before the phage has finished its replication cycle, thus protecting non-infected bacteria by aborting the phage infection and preventing its propagation. The sequence is that of Probable cyclic nucleotide synthase IK1_05630 from Bacillus cereus (strain VD146).